Here is a 116-residue protein sequence, read N- to C-terminus: Large ribosomal subunit protein uL18 (116 aa).

Belongs to the universal ribosomal protein uL18 family. As to quaternary structure, part of the 50S ribosomal subunit; part of the 5S rRNA/L5/L18/L25 subcomplex. Contacts the 5S and 23S rRNAs.

In terms of biological role, this is one of the proteins that bind and probably mediate the attachment of the 5S RNA into the large ribosomal subunit, where it forms part of the central protuberance. In Acholeplasma laidlawii (strain PG-8A), this protein is Large ribosomal subunit protein uL18.